We begin with the raw amino-acid sequence, 254 residues long: Small ribosomal subunit protein uS2 (254 aa).

Residues 228–248 (RKERKGQDAEEELKKASEPKA) are compositionally biased toward basic and acidic residues. The interval 228–254 (RKERKGQDAEEELKKASEPKAAEAAAE) is disordered.

The protein belongs to the universal ribosomal protein uS2 family.

The polypeptide is Small ribosomal subunit protein uS2 (Nitratidesulfovibrio vulgaris (strain ATCC 29579 / DSM 644 / CCUG 34227 / NCIMB 8303 / VKM B-1760 / Hildenborough) (Desulfovibrio vulgaris)).